A 158-amino-acid polypeptide reads, in one-letter code: Protein EOLA2 (158 aa).

The ASCH domain maps to 6–92 (LSFRQPYAGF…IAGLVDIGET (87 aa)).

This sequence belongs to the EOLA family.

This is Protein EOLA2 from Homo sapiens (Human).